The primary structure comprises 40 residues: Natriuretic peptide HsNP-b (40 aa).

Positions 1 to 8 (SGSKTAKI) are excised as a propeptide. The segment at 1-40 (SGSKTAKIGDGCFGVPIDHIGSTTDLGCGRPRPKPTPRGS) is disordered. A disulfide bond links Cys-12 and Cys-28. The span at 31-40 (PRPKPTPRGS) shows a compositional bias: basic residues.

The protein belongs to the natriuretic peptide family. Expressed by the venom gland.

It localises to the secreted. Functionally, snake venom natriuretic peptide that targets both NPR1 and NPR2. Exhibits hypotensive and vasodepressor activities. The chain is Natriuretic peptide HsNP-b from Hoplocephalus stephensii (Stephens's banded snake).